The following is a 91-amino-acid chain: MTKELCMRCYISGRVQGVWFRASAKKLAEQLMISGWARNLADGRVEVFACGKEDKLEEFYTWLQKGPLNARVDVCTRENLPWKDYISFDVL.

An Acylphosphatase-like domain is found at 6–91 (CMRCYISGRV…WKDYISFDVL (86 aa)). Residues arginine 21 and asparagine 39 contribute to the active site.

The protein belongs to the acylphosphatase family.

It carries out the reaction an acyl phosphate + H2O = a carboxylate + phosphate + H(+). The chain is Acylphosphatase (acyP) from Legionella pneumophila (strain Paris).